The primary structure comprises 617 residues: Secretogranin-2 (617 aa).

The first 30 residues, Met1 to Phe30, serve as a signal peptide directing secretion. At Tyr153 the chain carries Sulfotyrosine. A phosphoserine mark is found at Ser176 and Ser270. Basic and acidic residues-rich tracts occupy residues Thr261–Arg286 and Glu295–Glu307. The segment at Thr261–Glu307 is disordered. Ser434, Ser532, Ser555, and Ser556 each carry phosphoserine.

The protein belongs to the chromogranin/secretogranin protein family. As to quaternary structure, interacts with Secretogranin III/SCG3.

It localises to the secreted. In terms of biological role, neuroendocrine protein of the granin family that regulates the biogenesis of secretory granules. The polypeptide is Secretogranin-2 (Scg2) (Mus musculus (Mouse)).